Reading from the N-terminus, the 425-residue chain is Serine--tRNA ligase (425 aa).

230-232 (TAE) is an L-serine binding site. 261–263 (RSE) serves as a coordination point for ATP. Residue E284 participates in L-serine binding. 348-351 (EISS) provides a ligand contact to ATP. Residue S384 participates in L-serine binding.

It belongs to the class-II aminoacyl-tRNA synthetase family. Type-1 seryl-tRNA synthetase subfamily. In terms of assembly, homodimer. The tRNA molecule binds across the dimer.

It is found in the cytoplasm. It carries out the reaction tRNA(Ser) + L-serine + ATP = L-seryl-tRNA(Ser) + AMP + diphosphate + H(+). The catalysed reaction is tRNA(Sec) + L-serine + ATP = L-seryl-tRNA(Sec) + AMP + diphosphate + H(+). It participates in aminoacyl-tRNA biosynthesis; selenocysteinyl-tRNA(Sec) biosynthesis; L-seryl-tRNA(Sec) from L-serine and tRNA(Sec): step 1/1. Functionally, catalyzes the attachment of serine to tRNA(Ser). Is also able to aminoacylate tRNA(Sec) with serine, to form the misacylated tRNA L-seryl-tRNA(Sec), which will be further converted into selenocysteinyl-tRNA(Sec). The polypeptide is Serine--tRNA ligase (Streptococcus pyogenes serotype M12 (strain MGAS2096)).